The chain runs to 2264 residues: Protein Ycf2 (2264 aa).

Position 1611-1618 (1611-1618 (GSIGTGRS)) interacts with ATP.

It belongs to the Ycf2 family.

It localises to the plastid. The protein localises to the chloroplast stroma. Functionally, probable ATPase of unknown function. Its presence in a non-photosynthetic plant (Epifagus virginiana) and experiments in tobacco indicate that it has an essential function which is probably not related to photosynthesis. The protein is Protein Ycf2 of Lactuca sativa (Garden lettuce).